The chain runs to 328 residues: Transcription factor bHLH25 (328 aa).

The interval Pro-125–Asp-152 is disordered. Residues Ser-148 to Leu-197 form the bHLH domain.

In terms of assembly, homodimer. As to expression, expressed in flowers.

The protein localises to the nucleus. This Arabidopsis thaliana (Mouse-ear cress) protein is Transcription factor bHLH25 (BHLH25).